A 332-amino-acid polypeptide reads, in one-letter code: Protoheme IX farnesyltransferase (332 aa).

Transmembrane regions (helical) follow at residues 63 to 83 (LICT…LNCL), 109 to 129 (TVFL…ISGV), 132 to 152 (LAAG…TIIL), 160 to 180 (IVFG…AATG), 188 to 208 (WLFG…AILL), 245 to 265 (ILGV…LLPF), and 286 to 306 (AKGL…LLLI).

It belongs to the UbiA prenyltransferase family. Protoheme IX farnesyltransferase subfamily.

It localises to the cell inner membrane. The catalysed reaction is heme b + (2E,6E)-farnesyl diphosphate + H2O = Fe(II)-heme o + diphosphate. It participates in porphyrin-containing compound metabolism; heme O biosynthesis; heme O from protoheme: step 1/1. Converts heme B (protoheme IX) to heme O by substitution of the vinyl group on carbon 2 of heme B porphyrin ring with a hydroxyethyl farnesyl side group. This is Protoheme IX farnesyltransferase from Prochlorococcus marinus (strain MIT 9515).